Consider the following 808-residue polypeptide: Dynamin-like protein B (808 aa).

The Dynamin-type G domain maps to 43 to 340; that stretch reads FIETPEFVFI…TWRKYLDSVP (298 aa). The interval 53 to 60 is G1 motif; that stretch reads GKDGNGKS. Residue 53 to 60 participates in GTP binding; that stretch reads GKDGNGKS. The tract at residues 79 to 80 is G2 motif; the sequence is LR. The tract at residues 150–153 is G3 motif; it reads EPPS. Residues 150–154 and 239–242 each bind GTP; these read EPPSV and NKFH. The tract at residues 239–242 is G4 motif; that stretch reads NKFH. The tract at residues 276–279 is G5 motif; sequence PSTA. 2 disordered regions span residues 536-565 and 665-695; these read SSFR…SSSI and SLNN…NSNH. Low complexity-rich tracts occupy residues 552–565 and 665–694; these read SSPS…SSSI and SLNN…NNSN.

This sequence belongs to the TRAFAC class dynamin-like GTPase superfamily. Dynamin/Fzo/YdjA family.

It is found in the cytoplasm. The enzyme catalyses GTP + H2O = GDP + phosphate + H(+). Involved in cytokinesis. May hydrolyze GTP. The sequence is that of Dynamin-like protein B (dlpB) from Dictyostelium discoideum (Social amoeba).